Reading from the N-terminus, the 69-residue chain is Pleurain-A3 (69 aa).

The signal sequence occupies residues 1 to 22 (MFTLKKTLLLLFFLGTISISLC). A propeptide spanning residues 23-43 (KQARDADEDDGRKMTEEEVKR) is cleaved from the precursor. Cysteines 63 and 69 form a disulfide.

It belongs to the frog skin active peptide (FSAP) family. Pleurain subfamily. In terms of tissue distribution, expressed by the skin glands.

Its subcellular location is the secreted. In terms of biological role, antimicrobial peptide. Has activity against Gram-positive and -negative bacteria, and fungi. Has little hemolytic activity on red blood cells. The protein is Pleurain-A3 of Nidirana pleuraden (Yunnan pond frog).